The sequence spans 347 residues: Uroporphyrinogen decarboxylase (347 aa).

Substrate-binding positions include 36–40 (RQAGR), D86, Y160, S212, and H326.

The protein belongs to the uroporphyrinogen decarboxylase family. In terms of assembly, homodimer.

It is found in the cytoplasm. The enzyme catalyses uroporphyrinogen III + 4 H(+) = coproporphyrinogen III + 4 CO2. It functions in the pathway porphyrin-containing compound metabolism; protoporphyrin-IX biosynthesis; coproporphyrinogen-III from 5-aminolevulinate: step 4/4. Its function is as follows. Catalyzes the decarboxylation of four acetate groups of uroporphyrinogen-III to yield coproporphyrinogen-III. This chain is Uroporphyrinogen decarboxylase, found in Wolbachia sp. subsp. Brugia malayi (strain TRS).